A 421-amino-acid chain; its full sequence is uncharacterized protein (421 aa).

This is an uncharacterized protein from Caenorhabditis elegans.